The chain runs to 336 residues: Fructose-1,6-bisphosphatase class 1 (336 aa).

The Mg(2+) site is built by Glu-90, Asp-112, Leu-114, and Asp-115. Substrate contacts are provided by residues 115–118, Asn-207, and Lys-273; that span reads DGSS. Glu-279 contributes to the Mg(2+) binding site.

It belongs to the FBPase class 1 family. As to quaternary structure, homotetramer. Mg(2+) serves as cofactor.

It is found in the cytoplasm. It catalyses the reaction beta-D-fructose 1,6-bisphosphate + H2O = beta-D-fructose 6-phosphate + phosphate. It functions in the pathway carbohydrate biosynthesis; gluconeogenesis. The protein is Fructose-1,6-bisphosphatase class 1 of Xanthomonas euvesicatoria pv. vesicatoria (strain 85-10) (Xanthomonas campestris pv. vesicatoria).